The chain runs to 409 residues: MRGGNRLGAGRKVIPESEKKKRKSVYITDKLYTRIMDTDIENCNNFSQKCMALIELAMENLNKNNQEHSVKRNNILMVRDTKSTYNKTNNNFEKQNRGIKLTFIDLFAGIGGIRLGFEDKYTKCVFSSEWDKYAAQTYEANYGEKPHGDITKINENDIPDQDVLLAGFPCQPFSNIGKREGFAHERRNIIFDVLRILKKKQPKMFLLENVKGLLTNDNGNTFRVILDNLKSLGYSVFYEVMDAQNFGLPQRRERIVIVGFHPDLGINDFSFPKGNPDNKVPINAILEHNPTGYSISKRLQESYLFKKDDGKPQIVDFRCTYQVNTLVASYHKIQRLTGTFVKDGETGLRLFSELELKRLMGFPVDFKVPVSRTQMYRQFGNSVAVPMIKAVAGAMKERLLLAEMQVLKK.

The SAM-dependent MTase C5-type domain occupies leucine 101 to alanine 402. Cysteine 170 is an active-site residue.

Belongs to the class I-like SAM-binding methyltransferase superfamily. C5-methyltransferase family.

It catalyses the reaction a 2'-deoxycytidine in DNA + S-adenosyl-L-methionine = a 5-methyl-2'-deoxycytidine in DNA + S-adenosyl-L-homocysteine + H(+). A methylase, recognizes the double-stranded sequence 5'-CCGG-3', methylates C-1 on both strands, and protects the DNA from cleavage by the BsuFI endonuclease. This is Type II methyltransferase M.BsuFI (hsdFM) from Bacillus subtilis.